The sequence spans 228 residues: Phosphoribosylformylglycinamidine synthase subunit PurQ (228 aa).

A Glutamine amidotransferase type-1 domain is found at 3–225 (FAVLVFPGSN…LTTLKSGVVT (223 aa)). Cys86 acts as the Nucleophile in catalysis. Active-site residues include His194 and Glu196.

As to quaternary structure, part of the FGAM synthase complex composed of 1 PurL, 1 PurQ and 2 PurS subunits.

The protein resides in the cytoplasm. It carries out the reaction N(2)-formyl-N(1)-(5-phospho-beta-D-ribosyl)glycinamide + L-glutamine + ATP + H2O = 2-formamido-N(1)-(5-O-phospho-beta-D-ribosyl)acetamidine + L-glutamate + ADP + phosphate + H(+). The catalysed reaction is L-glutamine + H2O = L-glutamate + NH4(+). The protein operates within purine metabolism; IMP biosynthesis via de novo pathway; 5-amino-1-(5-phospho-D-ribosyl)imidazole from N(2)-formyl-N(1)-(5-phospho-D-ribosyl)glycinamide: step 1/2. In terms of biological role, part of the phosphoribosylformylglycinamidine synthase complex involved in the purines biosynthetic pathway. Catalyzes the ATP-dependent conversion of formylglycinamide ribonucleotide (FGAR) and glutamine to yield formylglycinamidine ribonucleotide (FGAM) and glutamate. The FGAM synthase complex is composed of three subunits. PurQ produces an ammonia molecule by converting glutamine to glutamate. PurL transfers the ammonia molecule to FGAR to form FGAM in an ATP-dependent manner. PurS interacts with PurQ and PurL and is thought to assist in the transfer of the ammonia molecule from PurQ to PurL. The protein is Phosphoribosylformylglycinamidine synthase subunit PurQ of Latilactobacillus sakei subsp. sakei (strain 23K) (Lactobacillus sakei subsp. sakei).